The sequence spans 316 residues: Olfactory receptor 2H1 (316 aa).

Over 1–23 (MVNQSSPMGFLLLGFSEHPALER) the chain is Extracellular. The N-linked (GlcNAc...) asparagine glycan is linked to Asn-3. Residues 24–47 (TLFVVVFTSYLLTLVGNTLIILLS) form a helical membrane-spanning segment. Over 48 to 55 (VLYPRLHS) the chain is Cytoplasmic. A helical transmembrane segment spans residues 56–77 (PMYFFLSDLSFLDLCFTTSCVP). At 78-98 (QMLVNLWGPKKTISFLGCSVQ) the chain is on the extracellular side. Cysteines 95 and 187 form a disulfide. A helical transmembrane segment spans residues 99–118 (LFIFLSLGTTECILLTVMAF). At 119–137 (DRYVAVCQPLHYATIIHPR) the chain is on the cytoplasmic side. The helical transmembrane segment at 138–156 (LCWQLASVAWVMSLVQSIV) threads the bilayer. Over 157 to 193 (QTPSTLHLPFCPHQQIDDFLCEVPSLIRLSCGDTSYN) the chain is Extracellular. Residues 194-217 (EIQLAVSSVIFVVVPLSLILASYG) traverse the membrane as a helical segment. Over 218–234 (ATAQAVLRINSATAWRK) the chain is Cytoplasmic. A helical membrane pass occupies residues 235-257 (AFGTCSSHLTVVTLFYSSVIAVY). Over 258 to 270 (LQPKNPYAQGRGK) the chain is Extracellular. The helical transmembrane segment at 271 to 290 (FFGLFYAVGTPSLNPLVYTL) threads the bilayer. The Cytoplasmic portion of the chain corresponds to 291–316 (RNKEIKRALRRLLGKERDSRESWRAA).

This sequence belongs to the G-protein coupled receptor 1 family.

The protein resides in the cell membrane. Functionally, odorant receptor. The polypeptide is Olfactory receptor 2H1 (OR2H1) (Homo sapiens (Human)).